We begin with the raw amino-acid sequence, 628 residues long: DNA mismatch repair protein MutL (628 aa).

The disordered stretch occupies residues 334 to 367 (SDFAQPSADNMPKPESPGAPAAHGRKDDAPAAHA). Residues 357–367 (GRKDDAPAAHA) show a composition bias toward basic and acidic residues.

This sequence belongs to the DNA mismatch repair MutL/HexB family.

In terms of biological role, this protein is involved in the repair of mismatches in DNA. It is required for dam-dependent methyl-directed DNA mismatch repair. May act as a 'molecular matchmaker', a protein that promotes the formation of a stable complex between two or more DNA-binding proteins in an ATP-dependent manner without itself being part of a final effector complex. The sequence is that of DNA mismatch repair protein MutL from Opitutus terrae (strain DSM 11246 / JCM 15787 / PB90-1).